The primary structure comprises 502 residues: Glutamate decarboxylase (502 aa).

The residue at position 278 (Lys278) is an N6-(pyridoxal phosphate)lysine. The tract at residues 471 to 502 (GLHHFHMDTVETQKDIIKHWRKIAGKKTSGVC) is calmodulin-binding.

It belongs to the group II decarboxylase family. Pyridoxal 5'-phosphate serves as cofactor.

The catalysed reaction is L-glutamate + H(+) = 4-aminobutanoate + CO2. Catalyzes the production of GABA. The calmodulin-binding is calcium-dependent and it is proposed that this may, directly or indirectly, form a calcium regulated control of GABA biosynthesis. The protein is Glutamate decarboxylase of Solanum lycopersicum (Tomato).